The chain runs to 426 residues: Enolase (426 aa).

Residue Gln-163 participates in (2R)-2-phosphoglycerate binding. Residue Glu-205 is the Proton donor of the active site. The Mg(2+) site is built by Asp-242, Glu-285, and Asp-312. Lys-337, Arg-366, Ser-367, and Lys-388 together coordinate (2R)-2-phosphoglycerate. Lys-337 (proton acceptor) is an active-site residue.

It belongs to the enolase family. Requires Mg(2+) as cofactor.

It is found in the cytoplasm. The protein resides in the secreted. It localises to the cell surface. It catalyses the reaction (2R)-2-phosphoglycerate = phosphoenolpyruvate + H2O. The protein operates within carbohydrate degradation; glycolysis; pyruvate from D-glyceraldehyde 3-phosphate: step 4/5. Functionally, catalyzes the reversible conversion of 2-phosphoglycerate (2-PG) into phosphoenolpyruvate (PEP). It is essential for the degradation of carbohydrates via glycolysis. The chain is Enolase from Desulfosudis oleivorans (strain DSM 6200 / JCM 39069 / Hxd3) (Desulfococcus oleovorans).